We begin with the raw amino-acid sequence, 92 residues long: Small ribosomal subunit protein uS19 (92 aa).

Belongs to the universal ribosomal protein uS19 family.

Functionally, protein S19 forms a complex with S13 that binds strongly to the 16S ribosomal RNA. This is Small ribosomal subunit protein uS19 from Methylobacterium nodulans (strain LMG 21967 / CNCM I-2342 / ORS 2060).